Here is a 1426-residue protein sequence, read N- to C-terminus: ABC transporter G family member 31 (1426 aa).

The 274-residue stretch at 142-415 folds into the ABC transporter 1 domain; the sequence is LRHLRIYRGG…FAGMGFRCPE (274 aa). ATP is bound at residue 175-182; that stretch reads GPPSSGKT. In terms of domain architecture, ABC transmembrane type-2 1 spans 493–706; it reads ELLKSNFQWQ…AQNAISVNEF (214 aa). 7 helical membrane passes run 511-531, 544-564, 592-612, 630-650, 655-675, 681-701, and 741-761; these read FIYV…MTVF, GIIY…NGFT, LPSW…WVLV, FLLL…MASL, IVAN…GGFI, IPAW…QNAI, and IGVG…TLFL. One can recognise an ABC transporter 2 domain in the interval 824–1076; it reads MCFKNINYYV…NLVEFFEAIP (253 aa). 869–876 is an ATP binding site; that stretch reads GVSGAGKT. Residues 1149 to 1363 enclose the ABC transmembrane type-2 2 domain; sequence AQYAACLWKQ…TLYGLLTSQF (215 aa). 7 consecutive transmembrane segments (helical) span residues 1168-1188, 1200-1220, 1245-1265, 1283-1303, 1313-1333, 1341-1363, and 1398-1418; these read YTAV…TICW, IFNA…TNAT, LPFA…QSLI, FLWY…YGMM, VAPI…GFMI, WWRW…TSQF, and VVAG…ALAI.

Belongs to the ABC transporter superfamily. ABCG family. PDR (TC 3.A.1.205) subfamily.

It is found in the membrane. In terms of biological role, may be a general defense protein. The chain is ABC transporter G family member 31 from Oryza sativa subsp. japonica (Rice).